The sequence spans 397 residues: Acetate kinase (397 aa).

Mg(2+) is bound at residue Asn8. Lys15 provides a ligand contact to ATP. Residue Arg90 coordinates substrate. The Proton donor/acceptor role is filled by Asp147. 207–211 (HLGAG) provides a ligand contact to ATP. Glu382 serves as a coordination point for Mg(2+).

The protein belongs to the acetokinase family. In terms of assembly, homodimer. The cofactor is Mg(2+). Mn(2+) is required as a cofactor.

It localises to the cytoplasm. It catalyses the reaction acetate + ATP = acetyl phosphate + ADP. It participates in metabolic intermediate biosynthesis; acetyl-CoA biosynthesis; acetyl-CoA from acetate: step 1/2. In terms of biological role, catalyzes the formation of acetyl phosphate from acetate and ATP. Can also catalyze the reverse reaction. The protein is Acetate kinase of Lactiplantibacillus plantarum (strain ATCC BAA-793 / NCIMB 8826 / WCFS1) (Lactobacillus plantarum).